The primary structure comprises 562 residues: Malate synthase (562 aa).

The active-site Proton acceptor is the arginine 177. The Proton donor role is filled by aspartate 463. The Microbody targeting signal signature appears at 560–562 (SRL).

It belongs to the malate synthase family.

The protein localises to the glyoxysome. It carries out the reaction glyoxylate + acetyl-CoA + H2O = (S)-malate + CoA + H(+). Its pathway is carbohydrate metabolism; glyoxylate cycle; (S)-malate from isocitrate: step 2/2. In terms of biological role, does not seem to be essential for lipid utilization and gluconeogenesis in seedlings. This chain is Malate synthase, found in Arabidopsis thaliana (Mouse-ear cress).